The following is an 89-amino-acid chain: Small ribosomal subunit protein uS17 (89 aa).

Belongs to the universal ribosomal protein uS17 family. As to quaternary structure, part of the 30S ribosomal subunit.

Functionally, one of the primary rRNA binding proteins, it binds specifically to the 5'-end of 16S ribosomal RNA. In Paracidovorax citrulli (strain AAC00-1) (Acidovorax citrulli), this protein is Small ribosomal subunit protein uS17.